The chain runs to 366 residues: Chorismate synthase (366 aa).

Arginine 48 serves as a coordination point for NADP(+). Residues arginine 131–serine 133, asparagine 243–alanine 244, glycine 288, lysine 303–serine 307, and arginine 329 each bind FMN.

This sequence belongs to the chorismate synthase family. Homotetramer. FMNH2 serves as cofactor.

It carries out the reaction 5-O-(1-carboxyvinyl)-3-phosphoshikimate = chorismate + phosphate. It participates in metabolic intermediate biosynthesis; chorismate biosynthesis; chorismate from D-erythrose 4-phosphate and phosphoenolpyruvate: step 7/7. Its function is as follows. Catalyzes the anti-1,4-elimination of the C-3 phosphate and the C-6 proR hydrogen from 5-enolpyruvylshikimate-3-phosphate (EPSP) to yield chorismate, which is the branch point compound that serves as the starting substrate for the three terminal pathways of aromatic amino acid biosynthesis. This reaction introduces a second double bond into the aromatic ring system. This Bartonella henselae (strain ATCC 49882 / DSM 28221 / CCUG 30454 / Houston 1) (Rochalimaea henselae) protein is Chorismate synthase.